The following is a 579-amino-acid chain: Mycobactin import ATP-binding/permease protein IrtB (579 aa).

The Cytoplasmic segment spans residues 1 to 16 (MIRTWIALVPNDHRAR). A helical membrane pass occupies residues 17–37 (LIGFALLAFCSVVARAVGTVL). The ABC transmembrane type-1 domain occupies 17–299 (LIGFALLAFC…VSELAPALES (283 aa)). The Periplasmic segment spans residues 38–52 (LVPLMAALFGEAPQR). Residues 53 to 73 (AWLWLGWLSAATVAGWVLDAV) traverse the membrane as a helical segment. Residues 74 to 123 (TARIGIELGFAVLNHTQHDVADRLPVVRLDWFTAENTATARQAIAATGPE) are Cytoplasmic-facing. A helical membrane pass occupies residues 124 to 146 (LVGLVVNLVTPLTSAILLPAVIA). The Periplasmic portion of the chain corresponds to 147–155 (LALLPISWQ). The helical transmembrane segment at 156-178 (LGVAALAGVPLLLGALWASAAFA) threads the bilayer. Residues 179–237 (RRADTAADKANTALTERIIEFARTQQALRAARRVEPARSLVGNALASQHTATMRLLGMQ) are Cytoplasmic-facing. A helical membrane pass occupies residues 238-258 (IPGQLLFSIASQLALIVLAGT). Topologically, residues 259–579 (TAALTITGTL…EAAEWQILAE (321 aa)) are periplasmic. Residues 332–567 (IEFDDVAFGY…GGRFSQFWRQ (236 aa)) enclose the ABC transporter domain. Residue 366–373 (GPSGCGKS) participates in ATP binding.

The protein belongs to the ABC transporter superfamily. Siderophore-Fe(3+) uptake transporter (SIUT) (TC 3.A.1.21) family. In terms of assembly, forms a heterodimer with IrtA.

It is found in the cell inner membrane. Functionally, part of the ABC transporter complex IrtAB involved in the import of iron-bound mycobactin (Fe-MBT) and carboxymycobactin (Fe-cMBT). Transmembrane domains (TMD) form a pore in the membrane and the ATP-binding domain (NBD) is responsible for energy generation. This chain is Mycobactin import ATP-binding/permease protein IrtB (irtB), found in Mycobacterium bovis (strain ATCC BAA-935 / AF2122/97).